The following is an 800-amino-acid chain: Integrin beta-5 (800 aa).

An N-terminal signal peptide occupies residues 1-24 (MPRAPALLFSCLLGLCALVPRLPG). The Extracellular portion of the chain corresponds to 25–722 (LNICTSGSAT…PECGTAPSAM (698 aa)). The PSI domain occupies 27–76 (ICTSGSATSCEECLLIHPKCAWCFKEDFGSLRSVTSRCDLKANLIRNGCG). Disulfide bonds link Cys28–Cys46, Cys36–Cys463, Cys39–Cys64, Cys49–Cys75, Cys202–Cys211, Cys259–Cys300, Cys401–Cys413, Cys433–Cys461, Cys465–Cys484, Cys476–Cys487, Cys489–Cys498, Cys500–Cys530, Cys513–Cys528, Cys522–Cys533, Cys535–Cys548, Cys550–Cys571, Cys555–Cys569, Cys563–Cys574, and Cys576–Cys585. Residues 136–378 (YPVDLYYLMD…QLIINAYNSI (243 aa)) form the VWFA domain. Positions 147 and 149 each coordinate Mg(2+). Ca(2+)-binding residues include Ser149, Asp152, Asp153, and Asp184. The Ca(2+) site is built by Asn242, Asp244, Pro246, and Glu247. Glu247 contributes to the Mg(2+) binding site. A glycan (N-linked (GlcNAc...) asparagine) is linked at Asn347. Residue Gly362 participates in Ca(2+) binding. I-EGF domains lie at 465 to 499 (CSAG…TRCE), 500 to 549 (CQEG…SFCE), 550 to 586 (CDNF…DNCN), and 587 to 626 (CSTD…ETCE). N-linked (GlcNAc...) asparagine glycosylation is present at Asn479. Asn552 is a glycosylation site (N-linked (GlcNAc...) asparagine). Asn586 is a glycosylation site (N-linked (GlcNAc...) asparagine). 9 cysteine pairs are disulfide-bonded: Cys587–Cys610, Cys594–Cys608, Cys602–Cys613, Cys615–Cys625, Cys628–Cys631, Cys635–Cys683, Cys641–Cys662, Cys644–Cys658, and Cys691–Cys715. Asn655 and Asn706 each carry an N-linked (GlcNAc...) asparagine glycan. A helical transmembrane segment spans residues 723-743 (TILLAVVGSILLTGFALLVIW). The Cytoplasmic portion of the chain corresponds to 744 to 800 (KLLVTIHDRREFAKFQSERSRARYEMASNPLYRKPISTHTVDFTFNKFNKSYNGTVD). Phosphoserine is present on Ser771.

This sequence belongs to the integrin beta chain family. As to quaternary structure, heterodimer of an alpha and a beta subunit. Beta-5 (ITGB5) associates with alpha-V (ITGAV). Interacts with MYO10. Interacts with DAB2. Integrin ITGAV:ITGB5 interacts with FBLN5 (via N-terminus). ITGAV:ITGB5 interacts with CCN3. Interacts with tensin TNS3; TNS3 also interacts with PEAK1, thus acting as an adapter molecule to bridge the association of PEAK1 with ITGB5.

It localises to the cell membrane. Functionally, integrin alpha-V/beta-5 (ITGAV:ITGB5) is a receptor for fibronectin. It recognizes the sequence R-G-D in its ligand. The chain is Integrin beta-5 (ITGB5) from Bos taurus (Bovine).